We begin with the raw amino-acid sequence, 121 residues long: Basic phospholipase A2 homolog AppP2 (121 aa).

7 cysteine pairs are disulfide-bonded: cysteine 26/cysteine 115, cysteine 28/cysteine 44, cysteine 43/cysteine 95, cysteine 49/cysteine 121, cysteine 50/cysteine 88, cysteine 57/cysteine 81, and cysteine 75/cysteine 86. The important for membrane-damaging activities in eukaryotes and bacteria; heparin-binding stretch occupies residues 105-117 (KKYKAYFKLKCKK).

It belongs to the phospholipase A2 family. Group II subfamily. K49 sub-subfamily. Monomer. In terms of tissue distribution, expressed by the venom gland.

Its subcellular location is the secreted. Its function is as follows. Snake venom phospholipase A2 (PLA2) that lacks enzymatic activity. Displays edema-inducing activities. Is myotoxic. A model of myotoxic mechanism has been proposed: an apo Lys49-PLA2 is activated by the entrance of a hydrophobic molecule (e.g. fatty acid) at the hydrophobic channel of the protein leading to a reorientation of a monomer. This reorientation causes a transition between 'inactive' to 'active' states, causing alignment of C-terminal and membrane-docking sites (MDoS) side-by-side and putting the membrane-disruption sites (MDiS) in the same plane, exposed to solvent and in a symmetric position for both monomers. The MDoS region stabilizes the toxin on membrane by the interaction of charged residues with phospholipid head groups. Subsequently, the MDiS region destabilizes the membrane with penetration of hydrophobic residues. This insertion causes a disorganization of the membrane, allowing an uncontrolled influx of ions (i.e. calcium and sodium), and eventually triggering irreversible intracellular alterations and cell death. The sequence is that of Basic phospholipase A2 homolog AppP2 from Agkistrodon piscivorus piscivorus (Eastern cottonmouth).